The primary structure comprises 654 residues: Protein fem-1 homolog A (654 aa).

ANK repeat units lie at residues 2-31 (DLHT…REEI), 40-70 (GGGT…SVEA), 82-111 (EGAP…SVNR), 115-145 (TNST…DLEV), 149-178 (HGHT…QVNR), 182-211 (KGNT…RMER), and 214-243 (YGMT…GHGQ). Ser-108 bears the Phosphoserine mark. The interval 241–265 (HGQLSGTELPGEGSSQMAGNHCSTP) is disordered. Over residues 253 to 263 (GSSQMAGNHCS) the composition is skewed to polar residues. TPR repeat units follow at residues 283–317 (VEAL…RHQG) and 375–408 (SYYI…QQNN). 2 ANK repeats span residues 519-561 (NGFT…DPDS) and 565-594 (DNNT…HMDA). A Phosphoserine modification is found at Ser-608.

Belongs to the fem-1 family. As to quaternary structure, component of a CRL2 E3 ubiquitin-protein ligase complex, also named ECS (Elongin BC-CUL2/5-SOCS-box protein) complex, composed of CUL2, Elongin BC (ELOB and ELOC), RBX1 and substrate-specific adapter FEM1A. Interacts with PTGER4. Interacts with NFKB1; the interaction is direct. Post-translationally, phosphorylated; highly phosphorylated in myoblasts and myotubes. Phosphorylation at Ser-108 and Ser-608 promote PGE2-EP4-mediated inhibition of inflammation. Dephosphorylated by protein phosphatase 2A (PP2A).

The protein localises to the mitochondrion. It localises to the cytoplasm. The protein operates within protein modification; protein ubiquitination. Its function is as follows. Substrate-recognition component of a Cul2-RING (CRL2) E3 ubiquitin-protein ligase complex of the DesCEND (destruction via C-end degrons) pathway, which recognizes a C-degron located at the extreme C terminus of target proteins, leading to their ubiquitination and degradation. The C-degron recognized by the DesCEND pathway is usually a motif of less than ten residues and can be present in full-length proteins, truncated proteins or proteolytically cleaved forms. The CRL2(FEM1A) complex specifically recognizes proteins with an arginine at the C-terminus: recognizes and binds proteins ending with -Lys/Arg-Xaa-Arg and -Lys/Arg-Xaa-Xaa-Arg C-degrons, such as SIL1 or OR51B2, leading to their ubiquitination and degradation. Involved in PGE2-EP4-mediated inhibition of inflammation of macrophages via interaction with NFKB1 and PTGER4. Promotes inflammation in brain microglia through MAP2K4/MKK4-mediated signaling. This chain is Protein fem-1 homolog A, found in Rattus norvegicus (Rat).